A 270-amino-acid polypeptide reads, in one-letter code: tRNA pseudouridine synthase A (270 aa).

Aspartate 51 functions as the Nucleophile in the catalytic mechanism. Tyrosine 109 is a substrate binding site.

Belongs to the tRNA pseudouridine synthase TruA family. In terms of assembly, homodimer.

It carries out the reaction uridine(38/39/40) in tRNA = pseudouridine(38/39/40) in tRNA. Its function is as follows. Formation of pseudouridine at positions 38, 39 and 40 in the anticodon stem and loop of transfer RNAs. This is tRNA pseudouridine synthase A from Burkholderia vietnamiensis (strain G4 / LMG 22486) (Burkholderia cepacia (strain R1808)).